We begin with the raw amino-acid sequence, 228 residues long: Ion-translocating oxidoreductase complex subunit E (228 aa).

The next 5 helical transmembrane spans lie at 18-38 (ALVQ…ATNA), 69-89 (IPIY…LINA), 92-112 (FGLY…CIVV), 125-145 (LLSA…MFVL), and 182-202 (PFLL…MLAV).

It belongs to the NqrDE/RnfAE family. In terms of assembly, the complex is composed of six subunits: RnfA, RnfB, RnfC, RnfD, RnfE and RnfG.

The protein resides in the cell inner membrane. Its function is as follows. Part of a membrane-bound complex that couples electron transfer with translocation of ions across the membrane. The protein is Ion-translocating oxidoreductase complex subunit E of Cronobacter sakazakii (strain ATCC BAA-894) (Enterobacter sakazakii).